A 368-amino-acid polypeptide reads, in one-letter code: Quinolinate synthase (368 aa).

Residues histidine 46 and serine 63 each contribute to the iminosuccinate site. [4Fe-4S] cluster is bound at residue cysteine 110. Iminosuccinate contacts are provided by residues 141 to 143 and serine 162; that span reads YVN. Cysteine 230 lines the [4Fe-4S] cluster pocket. Residues 256–258 and threonine 273 each bind iminosuccinate; that span reads HPE. Position 320 (cysteine 320) interacts with [4Fe-4S] cluster.

The protein belongs to the quinolinate synthase family. Type 3 subfamily. Requires [4Fe-4S] cluster as cofactor.

It localises to the cytoplasm. The enzyme catalyses iminosuccinate + dihydroxyacetone phosphate = quinolinate + phosphate + 2 H2O + H(+). The protein operates within cofactor biosynthesis; NAD(+) biosynthesis; quinolinate from iminoaspartate: step 1/1. In terms of biological role, catalyzes the condensation of iminoaspartate with dihydroxyacetone phosphate to form quinolinate. The protein is Quinolinate synthase of Bacillus cereus (strain B4264).